A 996-amino-acid chain; its full sequence is Low-density lipoprotein receptor-related protein 8 (996 aa).

An N-terminal signal peptide occupies residues 1–28 (MGRPELGALRPLALLLLLLLQLQHLSAA). Topologically, residues 29–858 (DPLPGGQGPV…GSQMGSTVTA (830 aa)) are extracellular. 8 consecutive LDL-receptor class A domains span residues 40–76 (ECEE…DDCP), 79–117 (TCAD…ATCS), 120–158 (ECPA…AGCP), 160–196 (LCAP…RGCS), 199–238 (ACPP…ELCG), 250–287 (ACAP…ADCS), 290–326 (PCRE…AGCL), and 330–369 (TCEG…KVCG). Cystine bridges form between Cys-41/Cys-53, Cys-48/Cys-66, Cys-60/Cys-75, Cys-80/Cys-92, Cys-87/Cys-105, Cys-99/Cys-116, Cys-121/Cys-135, Cys-128/Cys-148, Cys-142/Cys-157, Cys-161/Cys-173, Cys-168/Cys-186, Cys-180/Cys-195, Cys-200/Cys-213, Cys-207/Cys-226, Cys-220/Cys-237, Cys-251/Cys-264, Cys-259/Cys-277, Cys-271/Cys-286, Cys-291/Cys-303, Cys-298/Cys-316, Cys-310/Cys-325, Cys-331/Cys-344, Cys-339/Cys-357, Cys-351/Cys-368, Cys-373/Cys-384, Cys-380/Cys-393, Cys-395/Cys-407, Cys-413/Cys-423, Cys-419/Cys-432, and Cys-434/Cys-447. Trp-58, Asp-61, Asp-63, Asp-65, Asp-71, and Glu-72 together coordinate Ca(2+). An N-linked (GlcNAc...) asparagine glycan is attached at Asn-170. The region spanning 364 to 408 (PQKVCGLNECLHNNGGCSHICTDLKIGFECTCPAGFQLLDQKTCG) is the EGF-like 1 domain. The region spanning 409–448 (DIDECQDPDACSQICVNYKGYFKCECHPGYEMDTLTKNCK) is the EGF-like 2; calcium-binding domain. LDL-receptor class B repeat units follow at residues 495–541 (NRIY…DWVH), 542–584 (KHIY…DPLR), 585–628 (GFMY…DLLS), 629–671 (QRLY…AVFE), and 672–714 (DKVF…FHEL). Asn-551 carries N-linked (GlcNAc...) asparagine glycosylation. The interval 773-831 (STSTTTLASAMTRTVPATTRAPGTTIHDPTYQNHSTETPSQTAAAPHSVNVPRAPSTSP) is clustered O-linked oligosaccharides. A disordered region spans residues 778–851 (TLASAMTRTV…SQHYGNEGSQ (74 aa)). The segment covering 802 to 815 (TYQNHSTETPSQTA) has biased composition (polar residues). Asn-805 is a glycosylation site (N-linked (GlcNAc...) asparagine). The span at 824-839 (PRAPSTSPSTPSPATS) shows a compositional bias: low complexity. Residue Asn-840 is glycosylated (N-linked (GlcNAc...) asparagine). Polar residues predominate over residues 840-851 (NHSQHYGNEGSQ). The chain crosses the membrane as a helical span at residues 859–881 (AVIGVIVPIVVIALLCMSGYLIW). At 882–996 (RNWKRKNTKS…ALSLEDDGLP (115 aa)) the chain is on the cytoplasmic side.

It belongs to the LDLR family. In terms of assembly, homooligomer. Interacts with VLDLR. Reelin associates with two or more receptor molecules. Interacts with DAB1 and JNK-interacting proteins. Interacts with SNX17. Interacts with PCSK9. Interacts with MDK; this interaction is calcium dependent. Interacts with CLU. In terms of processing, O-glycosylated. Some alternatively spliced isoforms lack the O-linked sugar domain. Undergoes sequential, furin and gamma-secretase dependent, proteolytic processing, resulting in the extracellular release of the entire ligand-binding domain as a soluble polypeptide and in the intracellular domain (ICD) release into the cytoplasm. The gamma-secretase-dependent proteolytical processing occurs after the bulk of the extracellular domain has been shed, in a furin-dependent manner, in alternatively spliced isoforms carrying the furin cleavage site. Hypoglycosylation (mainly hypo-O-glycosylation) leads to increased extracellular cleavage, which in turn results in accelerating release of the intracellular domain (ICD) by the gamma-secretase. The resulting receptor fragment is able to inhibit Reelin signaling and in particular the Reelin-induced DAB1 phosphorylation. Post-translationally, tyrosine phosphorylated upon apoE binding. In terms of processing, ubiquitinated by MYLIP leading to degradation. In terms of tissue distribution, expressed in neurons throughout the brain, with strong expression in pyramidal neurons of the hippocampus, granule cells of the dentate gyrus, cortical neurons and Purkinje cells of the cerebellum. Also expressed in the epithelium of the choroid plexus and of the blood vessels (apical expression), as well as in the epididymis.

The protein resides in the cell membrane. The protein localises to the secreted. Functionally, cell surface receptor for Reelin (RELN) and apolipoprotein E (apoE)-containing ligands. LRP8 participates in transmitting the extracellular Reelin signal to intracellular signaling processes, by binding to DAB1 on its cytoplasmic tail. Reelin acts via both the VLDL receptor (VLDLR) and LRP8 to regulate DAB1 tyrosine phosphorylation and microtubule function in neurons. LRP8 has higher affinity for Reelin than VLDLR. LRP8 is thus a key component of the Reelin pathway which governs neuronal layering of the forebrain during embryonic brain development. Binds the endoplasmic reticulum resident receptor-associated protein (RAP). Binds dimers of beta 2-glycoprotein I and may be involved in the suppression of platelet aggregation in the vasculature. Highly expressed in the initial segment of the epididymis, where it affects the functional expression of clusterin and phospholipid hydroperoxide glutathione peroxidase (PHGPx), two proteins required for sperm maturation. May also function as an endocytic receptor. Not required for endocytic uptake of SEPP1 in the kidney which is mediated by LRP2. Together with its ligand, apolipoprotein E (apoE), may indirectly play a role in the suppression of the innate immune response by controlling the survival of myeloid-derived suppressor cells. This chain is Low-density lipoprotein receptor-related protein 8 (Lrp8), found in Mus musculus (Mouse).